We begin with the raw amino-acid sequence, 309 residues long: Zinc finger protein-like 1 homolog (309 aa).

The segment at methionine 1–tryptophan 43 adopts a B box-type; degenerate zinc-finger fold. An RING-type; atypical zinc finger spans residues cysteine 53–serine 101. Residues glycine 200–asparagine 221 are disordered. Residues lysine 254 to methionine 274 traverse the membrane as a helical segment.

The protein belongs to the ZFPL1 family.

It localises to the membrane. The sequence is that of Zinc finger protein-like 1 homolog from Caenorhabditis elegans.